We begin with the raw amino-acid sequence, 1560 residues long: uncharacterized protein (1560 aa).

A disordered region spans residues methionine 1 to asparagine 46. Acidic residues predominate over residues phenylalanine 15–aspartate 28. Residues aspartate 29–asparagine 46 show a composition bias toward basic and acidic residues. Coiled-coil stretches lie at residues aspartate 36–asparagine 60 and lysine 317–asparagine 359. The disordered stretch occupies residues lysine 568–tyrosine 594. Residues asparagine 583 to tyrosine 594 are compositionally biased toward low complexity. The stretch at aspartate 1188–asparagine 1239 forms a coiled coil. The next 2 membrane-spanning stretches (helical) occupy residues leucine 1271–leucine 1291 and leucine 1314–serine 1334.

The protein resides in the membrane. This is an uncharacterized protein from Plasmodium falciparum (isolate 3D7).